A 604-amino-acid polypeptide reads, in one-letter code: Glutamine--fructose-6-phosphate aminotransferase [isomerizing] (604 aa).

Catalysis depends on cysteine 2, which acts as the Nucleophile; for GATase activity. Residues 2–218 (CGIVGVVGNR…DKELVVLTKD (217 aa)) enclose the Glutamine amidotransferase type-2 domain. SIS domains lie at 284-423 (IVKS…ANGK) and 456-594 (VANL…VDKP). Lysine 599 functions as the For Fru-6P isomerization activity in the catalytic mechanism.

As to quaternary structure, homodimer.

The protein localises to the cytoplasm. The catalysed reaction is D-fructose 6-phosphate + L-glutamine = D-glucosamine 6-phosphate + L-glutamate. Functionally, catalyzes the first step in hexosamine metabolism, converting fructose-6P into glucosamine-6P using glutamine as a nitrogen source. The sequence is that of Glutamine--fructose-6-phosphate aminotransferase [isomerizing] from Streptococcus mutans serotype c (strain ATCC 700610 / UA159).